A 311-amino-acid polypeptide reads, in one-letter code: Olfactory receptor 5L2 (311 aa).

Over 1–25 the chain is Extracellular; it reads MGKENCTTVAEFILLGLSDVPELRV. The N-linked (GlcNAc...) asparagine glycan is linked to asparagine 5. The chain crosses the membrane as a helical span at residues 26–46; sequence CLFLLFLLIYGVTLLANLGMT. The Cytoplasmic portion of the chain corresponds to 47–54; that stretch reads ALIQVSSR. The helical transmembrane segment at 55–75 threads the bilayer; sequence LHTPVYFFLSHLSFVDFCYSS. Over 76-99 the chain is Extracellular; that stretch reads IIVPKMLANIFNKDKAISFLGCMV. Cysteine 97 and cysteine 189 are disulfide-bonded. A helical membrane pass occupies residues 100-120; that stretch reads QFYLFCTCGVTEVFLLAVMAY. The Cytoplasmic segment spans residues 121–139; it reads DRFVAICNPLLYMVTMSQK. Residues 140–160 traverse the membrane as a helical segment; that stretch reads LRVELTSCCYFCGTVCSLIHS. Topologically, residues 161–196 are extracellular; it reads SLALRILFYRSNVINHFFCDLPPLLSLACSDVTVNE. N-linked (GlcNAc...) asparagine glycosylation occurs at asparagine 195. Residues 197 to 217 form a helical membrane-spanning segment; sequence TLLFLVATLNESVTIMIILTS. At 218–237 the chain is on the cytoplasmic side; that stretch reads YLLILTTILKIHSAESRHKA. A helical transmembrane segment spans residues 238 to 258; that stretch reads FSTCASHLTAITVSHGTILYI. At 259–271 the chain is on the extracellular side; the sequence is YCRPSSGNSGDVD. Residues 272-292 form a helical membrane-spanning segment; the sequence is KVATVFYTVVIPMLNPLIYSL. Over 293 to 311 the chain is Cytoplasmic; the sequence is RNKDVNKALRKVMGSKIHS.

It belongs to the G-protein coupled receptor 1 family.

The protein resides in the cell membrane. Functionally, odorant receptor. The protein is Olfactory receptor 5L2 (OR5L2) of Homo sapiens (Human).